The following is a 565-amino-acid chain: Formate--tetrahydrofolate ligase (565 aa).

67–74 (TPLGEGKT) lines the ATP pocket.

The protein belongs to the formate--tetrahydrofolate ligase family.

The enzyme catalyses (6S)-5,6,7,8-tetrahydrofolate + formate + ATP = (6R)-10-formyltetrahydrofolate + ADP + phosphate. It functions in the pathway one-carbon metabolism; tetrahydrofolate interconversion. The sequence is that of Formate--tetrahydrofolate ligase from Saccharopolyspora erythraea (strain ATCC 11635 / DSM 40517 / JCM 4748 / NBRC 13426 / NCIMB 8594 / NRRL 2338).